A 177-amino-acid polypeptide reads, in one-letter code: MSRVGKLPITIPEGVTVGLNDLEVKISGPKGELSKIFKGNIAISLAENKLLVKPLAANKSARAMWGTARSIISNMVIGVKEGFKLKLEINGVGYRAMVKGKYLNLMLAKSHNTKIEIPSHIKIDVPKQNIIILEGTDKEKLGQFASIIIKQRPPEPYKGKGIKFDNQFIPRKEGKKN.

It belongs to the universal ribosomal protein uL6 family. Part of the 50S ribosomal subunit.

This protein binds to the 23S rRNA, and is important in its secondary structure. It is located near the subunit interface in the base of the L7/L12 stalk, and near the tRNA binding site of the peptidyltransferase center. In Rickettsia akari (strain Hartford), this protein is Large ribosomal subunit protein uL6.